The primary structure comprises 703 residues: Histone-lysine N-methyltransferase SETDB2 (703 aa).

One can recognise an MBD domain in the interval 178–248; sequence FTKGNPLQLP…DNFSFNNHVR (71 aa). The Pre-SET domain occupies 310 to 384; the sequence is KCCNCTDGCL…LCQNRVVQHG (75 aa). Residues Cys312, Cys314, Cys318, Cys324, Cys326, Cys365, Cys369, Cys371, and Cys376 each coordinate Zn(2+). Positions 387-678 constitute an SET domain; it reads LRLQVFKTNT…AGTELTWDYS (292 aa). 397–399 provides a ligand contact to S-adenosyl-L-methionine; the sequence is KGW. The interval 492–588 is disordered; that stretch reads TFSPRQARSG…SSSVISGGHP (97 aa). Residues 511-525 are compositionally biased toward basic residues; it reads RRPKTKTSMLQKRRR. Polar residues predominate over residues 550–560; that stretch reads PEQKSSAGTKI. The span at 571-586 shows a compositional bias: low complexity; sequence SGYVSEESSSSVISGG. S-adenosyl-L-methionine-binding positions include Arg632 and 635-636; that span reads NH. Positions 638, 691, 693, and 698 each coordinate Zn(2+).

It belongs to the class V-like SAM-binding methyltransferase superfamily.

It is found in the nucleus. It localises to the chromosome. It catalyses the reaction N(6),N(6)-dimethyl-L-lysyl(9)-[histone H3] + S-adenosyl-L-methionine = N(6),N(6),N(6)-trimethyl-L-lysyl(9)-[histone H3] + S-adenosyl-L-homocysteine + H(+). Its function is as follows. Histone methyltransferase involved in left-right axis specification in early development and mitosis. Specifically trimethylates 'Lys-9' of histone H3 (H3K9me3). H3K9me3 is a specific tag for epigenetic transcriptional repression that recruits HP1 (CBX1, CBX3 and/or CBX5) proteins to methylated histones. Contributes to H3K9me3 in both the interspersed repetitive elements and centromere-associated repeats. Plays a role in chromosome condensation and segregation during mitosis. The protein is Histone-lysine N-methyltransferase SETDB2 (setdb2) of Xenopus laevis (African clawed frog).